The following is a 224-amino-acid chain: Cytidylate kinase (224 aa).

11–19 lines the ATP pocket; that stretch reads GPAGAGKST.

The protein belongs to the cytidylate kinase family. Type 1 subfamily.

The protein resides in the cytoplasm. It catalyses the reaction CMP + ATP = CDP + ADP. The enzyme catalyses dCMP + ATP = dCDP + ADP. This is Cytidylate kinase from Exiguobacterium sp. (strain ATCC BAA-1283 / AT1b).